We begin with the raw amino-acid sequence, 471 residues long: GDP-fucose protein O-fucosyltransferase 3 (471 aa).

The Cytoplasmic portion of the chain corresponds to 1-8; sequence MNRMWEKK. The helical; Signal-anchor for type II membrane protein transmembrane segment at 9 to 29 threads the bilayer; it reads FWISCFFIILFFILVTLQVMV. The Lumenal portion of the chain corresponds to 30–471; sequence ELGRFEKRET…EFWNLVFKFQ (442 aa). 4 N-linked (GlcNAc...) asparagine glycosylation sites follow: N102, N122, N160, and N310. C381 and C384 are oxidised to a cystine. An N-linked (GlcNAc...) asparagine glycan is attached at N457.

The protein belongs to the glycosyltransferase 10 family.

The protein localises to the endoplasmic reticulum membrane. It carries out the reaction L-threonyl-[protein] + GDP-beta-L-fucose = 3-O-(alpha-L-fucosyl)-L-threonyl-[protein] + GDP + H(+). It catalyses the reaction L-seryl-[protein] + GDP-beta-L-fucose = 3-O-(alpha-L-fucosyl)-L-seryl-[protein] + GDP + H(+). Its pathway is protein modification; protein glycosylation. Its function is as follows. Protein O-fucosyltransferase that specifically catalyzes O-fucosylation of serine or threonine residues in EMI domains of target proteins. Attaches fucose through an O-glycosidic linkage. O-fucosylation of EMI domain-containing proteins may be required for facilitating protein folding and secretion. This chain is GDP-fucose protein O-fucosyltransferase 3 (fut10), found in Xenopus tropicalis (Western clawed frog).